The primary structure comprises 63 residues: Serine protease inhibitor 3 (63 aa).

An N-terminal signal peptide occupies residues 1 to 23 (MAKLLAVFLVLLIAALVCEQALA). Cystine bridges form between Cys-24/Cys-39, Cys-34/Cys-52, and Cys-37/Cys-47. Positions 24-55 (CTPGSRKYDGCNWCTCSSGGAWICTLKYCPPS) constitute a Pacifastin domain.

It belongs to the protease inhibitor I19 family. As to expression, expressed in hemolymph, ovaries, testes and fat body of adults but are absent in the gut. Also present in larval hemolymph and fat body.

It localises to the secreted. In terms of biological role, in vitro, active against alpha-chymotrypsin. This chain is Serine protease inhibitor 3, found in Schistocerca gregaria (Desert locust).